A 288-amino-acid polypeptide reads, in one-letter code: Probable prolyl 4-hydroxylase 9 (288 aa).

The Cytoplasmic portion of the chain corresponds to 1-12; it reads MKSRLKSYRRKK. A helical; Signal-anchor for type II membrane protein membrane pass occupies residues 13 to 33; the sequence is LGLATVIVFCSLCFLFGFYGS. At 34–288 the chain is on the lumenal side; that stretch reads TLLSQNVPRV…KWIRDQDQEE (255 aa). The Fe2OG dioxygenase domain occupies 164–283; it reads HGESFNILRY…KWVATKWIRD (120 aa). Residues His-182 and Asp-184 each coordinate Fe cation. N-linked (GlcNAc...) asparagine glycans are attached at residues Asn-221 and Asn-255. Position 264 (His-264) interacts with Fe cation. Lys-274 contacts 2-oxoglutarate.

The protein belongs to the P4HA family. Fe(2+) serves as cofactor. L-ascorbate is required as a cofactor.

Its subcellular location is the endoplasmic reticulum membrane. The protein resides in the golgi apparatus. The enzyme catalyses L-prolyl-[collagen] + 2-oxoglutarate + O2 = trans-4-hydroxy-L-prolyl-[collagen] + succinate + CO2. In terms of biological role, catalyzes the post-translational formation of 4-hydroxyproline in -Xaa-Pro-Gly- sequences in proline-rich peptide sequences of plant glycoproteins and other proteins. Hydroxyprolines are important constituent of many plant cell wall glycoproteins such as extensins, hydroxyproline-rich glycoproteins, lectins and arabinogalactan proteins. The chain is Probable prolyl 4-hydroxylase 9 from Arabidopsis thaliana (Mouse-ear cress).